The chain runs to 447 residues: Phosphoglucosamine mutase (447 aa).

Serine 106 acts as the Phosphoserine intermediate in catalysis. Positions 106, 245, 247, and 249 each coordinate Mg(2+). Serine 106 bears the Phosphoserine mark.

This sequence belongs to the phosphohexose mutase family. Mg(2+) serves as cofactor. Activated by phosphorylation.

It carries out the reaction alpha-D-glucosamine 1-phosphate = D-glucosamine 6-phosphate. Functionally, catalyzes the conversion of glucosamine-6-phosphate to glucosamine-1-phosphate. This Cupriavidus pinatubonensis (strain JMP 134 / LMG 1197) (Cupriavidus necator (strain JMP 134)) protein is Phosphoglucosamine mutase.